The chain runs to 185 residues: Hypoxanthine/guanine phosphoribosyltransferase (185 aa).

Belongs to the purine/pyrimidine phosphoribosyltransferase family. Archaeal HPRT subfamily. In terms of assembly, homodimer.

The protein resides in the cytoplasm. It carries out the reaction IMP + diphosphate = hypoxanthine + 5-phospho-alpha-D-ribose 1-diphosphate. The catalysed reaction is GMP + diphosphate = guanine + 5-phospho-alpha-D-ribose 1-diphosphate. It participates in purine metabolism; IMP biosynthesis via salvage pathway; IMP from hypoxanthine: step 1/1. In terms of biological role, catalyzes a salvage reaction resulting in the formation of IMP that is energically less costly than de novo synthesis. The sequence is that of Hypoxanthine/guanine phosphoribosyltransferase (hpt) from Methanococcus maripaludis (strain DSM 14266 / JCM 13030 / NBRC 101832 / S2 / LL).